We begin with the raw amino-acid sequence, 801 residues long: Leucine--tRNA ligase (801 aa).

Positions 40-51 (PYPSGAGLHVGH) match the 'HIGH' region motif. The 'KMSKS' region signature appears at 576 to 580 (KMSKS). Lys579 lines the ATP pocket.

The protein belongs to the class-I aminoacyl-tRNA synthetase family.

The protein resides in the cytoplasm. It carries out the reaction tRNA(Leu) + L-leucine + ATP = L-leucyl-tRNA(Leu) + AMP + diphosphate. This chain is Leucine--tRNA ligase, found in Exiguobacterium sibiricum (strain DSM 17290 / CCUG 55495 / CIP 109462 / JCM 13490 / 255-15).